Here is a 900-residue protein sequence, read N- to C-terminus: Alanine--tRNA ligase (900 aa).

4 residues coordinate Zn(2+): His604, His608, Cys708, and His712.

This sequence belongs to the class-II aminoacyl-tRNA synthetase family. It depends on Zn(2+) as a cofactor.

The protein localises to the cytoplasm. The enzyme catalyses tRNA(Ala) + L-alanine + ATP = L-alanyl-tRNA(Ala) + AMP + diphosphate. Functionally, catalyzes the attachment of alanine to tRNA(Ala) in a two-step reaction: alanine is first activated by ATP to form Ala-AMP and then transferred to the acceptor end of tRNA(Ala). Also edits incorrectly charged Ser-tRNA(Ala) and Gly-tRNA(Ala) via its editing domain. The polypeptide is Alanine--tRNA ligase (Saccharolobus islandicus (strain M.16.27) (Sulfolobus islandicus)).